The primary structure comprises 306 residues: Protein FdhE homolog (306 aa).

The protein belongs to the FdhE family.

The protein resides in the cytoplasm. Necessary for formate dehydrogenase activity. The sequence is that of Protein FdhE homolog from Glaesserella parasuis serovar 5 (strain SH0165) (Haemophilus parasuis).